The chain runs to 334 residues: Fructose-1,6-bisphosphatase class 1 (334 aa).

E89, D112, L114, and D115 together coordinate Mg(2+). Residues 115 to 118 (DGSS), N208, Y241, and K271 contribute to the substrate site. E277 serves as a coordination point for Mg(2+).

This sequence belongs to the FBPase class 1 family. In terms of assembly, homotetramer. Mg(2+) serves as cofactor.

The protein resides in the cytoplasm. It carries out the reaction beta-D-fructose 1,6-bisphosphate + H2O = beta-D-fructose 6-phosphate + phosphate. It functions in the pathway carbohydrate biosynthesis; gluconeogenesis. The polypeptide is Fructose-1,6-bisphosphatase class 1 (Photorhabdus laumondii subsp. laumondii (strain DSM 15139 / CIP 105565 / TT01) (Photorhabdus luminescens subsp. laumondii)).